A 406-amino-acid chain; its full sequence is Imidazolonepropionase (406 aa).

Fe(3+) is bound by residues histidine 72 and histidine 74. Histidine 72 and histidine 74 together coordinate Zn(2+). 4-imidazolone-5-propanoate contacts are provided by arginine 81, tyrosine 144, and histidine 177. Tyrosine 144 contacts N-formimidoyl-L-glutamate. Residue histidine 242 coordinates Fe(3+). Position 242 (histidine 242) interacts with Zn(2+). Position 245 (glutamine 245) interacts with 4-imidazolone-5-propanoate. Position 317 (aspartate 317) interacts with Fe(3+). Residue aspartate 317 participates in Zn(2+) binding. Residues asparagine 319 and glycine 321 each contribute to the N-formimidoyl-L-glutamate site. Residue threonine 322 coordinates 4-imidazolone-5-propanoate.

The protein belongs to the metallo-dependent hydrolases superfamily. HutI family. Requires Zn(2+) as cofactor. Fe(3+) serves as cofactor.

Its subcellular location is the cytoplasm. It carries out the reaction 4-imidazolone-5-propanoate + H2O = N-formimidoyl-L-glutamate. It participates in amino-acid degradation; L-histidine degradation into L-glutamate; N-formimidoyl-L-glutamate from L-histidine: step 3/3. Functionally, catalyzes the hydrolytic cleavage of the carbon-nitrogen bond in imidazolone-5-propanoate to yield N-formimidoyl-L-glutamate. It is the third step in the universal histidine degradation pathway. The sequence is that of Imidazolonepropionase from Yersinia pestis bv. Antiqua (strain Antiqua).